The sequence spans 327 residues: Malate dehydrogenase (327 aa).

11-17 provides a ligand contact to NAD(+); it reads GAAGQIA. Substrate is bound by residues Arg-92 and Arg-98. NAD(+) is bound by residues Asn-105, Gln-112, and 128–130; that span reads VGN. Residues Asn-130 and Arg-160 each contribute to the substrate site. His-185 serves as the catalytic Proton acceptor.

Belongs to the LDH/MDH superfamily. MDH type 2 family.

It catalyses the reaction (S)-malate + NAD(+) = oxaloacetate + NADH + H(+). Its function is as follows. Catalyzes the reversible oxidation of malate to oxaloacetate. The polypeptide is Malate dehydrogenase (Magnetococcus marinus (strain ATCC BAA-1437 / JCM 17883 / MC-1)).